The following is a 347-amino-acid chain: Quinolinate synthase (347 aa).

Iminosuccinate is bound by residues His47 and Ser68. Cys113 lines the [4Fe-4S] cluster pocket. Iminosuccinate-binding positions include 139–141 (YAN) and Ser156. Cys200 serves as a coordination point for [4Fe-4S] cluster. Iminosuccinate-binding positions include 226 to 228 (HPE) and Thr243. Cys297 is a binding site for [4Fe-4S] cluster.

Belongs to the quinolinate synthase family. Type 1 subfamily. It depends on [4Fe-4S] cluster as a cofactor.

Its subcellular location is the cytoplasm. The catalysed reaction is iminosuccinate + dihydroxyacetone phosphate = quinolinate + phosphate + 2 H2O + H(+). It functions in the pathway cofactor biosynthesis; NAD(+) biosynthesis; quinolinate from iminoaspartate: step 1/1. Catalyzes the condensation of iminoaspartate with dihydroxyacetone phosphate to form quinolinate. The sequence is that of Quinolinate synthase from Escherichia coli O7:K1 (strain IAI39 / ExPEC).